Consider the following 423-residue polypeptide: Putative UPF0496 protein 5 (423 aa).

A compositionally biased stretch (basic residues) spans 1–14 (MGNRHGIMRPRRLA). The interval 1–37 (MGNRHGIMRPRRLASGRSAAEEEEDGEGEPGSYEAAC) is disordered. The next 2 membrane-spanning stretches (helical) occupy residues 224–244 (IVFL…AAIA) and 247–267 (PVAA…GKWM).

The protein belongs to the UPF0496 family.

It is found in the membrane. The polypeptide is Putative UPF0496 protein 5 (Oryza sativa subsp. japonica (Rice)).